Consider the following 118-residue polypeptide: Co-chaperonin GroES (118 aa).

The protein belongs to the GroES chaperonin family. Heptamer of 7 subunits arranged in a ring. Interacts with the chaperonin GroEL.

It localises to the cytoplasm. Together with the chaperonin GroEL, plays an essential role in assisting protein folding. The GroEL-GroES system forms a nano-cage that allows encapsulation of the non-native substrate proteins and provides a physical environment optimized to promote and accelerate protein folding. GroES binds to the apical surface of the GroEL ring, thereby capping the opening of the GroEL channel. In Helicobacter pylori (strain Shi470), this protein is Co-chaperonin GroES.